The primary structure comprises 493 residues: METFQCLTLFLLFISTVFILKRKFSHKPNLPPSPPKLPILGNFHQLGTLVHRAVTVLAAKYGPLMLLHFGKTPVLIVSSQETAKEIMKTHDLALANRPLTTAARALLYDCTDISFAPYGEYWREMKKMAVLNLLSIKKIQSFRSVREELASDMIKEITRLSKTGAPVDVTNMLYHFSEDLLFRCTLGFKPKGQHKFQKLSRDFLDLVGAFCFNDFFPGMAWMDALTGLNRKLKKGSRELDDFVDELIEERIAMVKDGVEPNEFLDLLLHTHRDTTQEIKLTRDNVKAIILDTFLGGIDLPASVMEWAMAELMRNPSKMKIAQEEVRKVVGNKNKVDEDDVYQMNFLKSAVKETLRLHPPAPLLFARESYTSINVENYIIPPYTSVMINIWHIQRDPKLWDKAEEFIPERFMNSGIDYKSHDYEFIPFGSGRRGCPGMSFGVAAVEFAVANLLYWFDWKFVGDTTPETLDMTEDYCFALFKKKPLHFIPISRSS.

Residues 1 to 21 traverse the membrane as a helical segment; sequence METFQCLTLFLLFISTVFILK. C434 is a heme binding site.

This sequence belongs to the cytochrome P450 family. The cofactor is heme.

It localises to the membrane. The enzyme catalyses (-)-bursehernin + reduced [NADPH--hemoprotein reductase] + O2 = (-)-5'-demethylyatein + oxidized [NADPH--hemoprotein reductase] + H2O + H(+). It participates in aromatic compound metabolism; phenylpropanoid biosynthesis. Cytochrome P450 involved in the biosynthesis of etoposide, a chemotherapeutic compound of the topoisomerase inhibitor family. Catalyzes the conversion of bursehernin to demethylyatein. The sequence is that of Desmethylyatein synthase from Sinopodophyllum hexandrum (Himalayan may apple).